The following is a 715-amino-acid chain: Transcription activator of gluconeogenesis MGYG_02011 (715 aa).

Positions 1 to 14 (MSPHQTTGQESDNM) are enriched in polar residues. Positions 1–28 (MSPHQTTGQESDNMAVNGENAPASSQYI) are disordered. The segment at residues 66 to 94 (CYACQRGHLTCGDERPCQRCIKRGFQDAC) is a DNA-binding region (zn(2)-C6 fungal-type). Composition is skewed to polar residues over residues 129–166 (QNNV…PQNK), 179–191 (YASQ…TYQI), 203–223 (SLPQ…GQFN), and 362–385 (MMTT…RPNA). Disordered stretches follow at residues 129–223 (QNNV…GQFN), 354–414 (SPAS…RRRH), 534–569 (NHNV…NSST), and 628–663 (GSNG…NGRG). Residues 386–400 (SVSQQRQQPVVSTPQ) are compositionally biased toward low complexity. Composition is skewed to polar residues over residues 535–554 (HNVN…SRGS) and 639–649 (GEASSSEANEL). The span at 650-662 (NGSNANGATTNGR) shows a compositional bias: low complexity.

Belongs to the ERT1/acuK family.

It localises to the nucleus. Its function is as follows. Transcription factor which regulates nonfermentable carbon utilization. Activator of gluconeogenetic genes. This Arthroderma gypseum (strain ATCC MYA-4604 / CBS 118893) (Microsporum gypseum) protein is Transcription activator of gluconeogenesis MGYG_02011.